The chain runs to 685 residues: Acetate--CoA ligase [ADP-forming] I (685 aa).

The ATP-grasp domain occupies 477-513 (LPVLEAYGIEVAPYGIARNVDEARDIAESIGYPVVLK). An ATP-binding site is contributed by 503–514 (AESIGYPVVLKV).

The protein in the N-terminal section; belongs to the acetate CoA ligase alpha subunit family. In the C-terminal section; belongs to the acetate CoA ligase beta subunit family. Homodimer.

The catalysed reaction is acetate + ATP + CoA = acetyl-CoA + ADP + phosphate. Its activity is regulated as follows. Activity requires divalent metal cations. In terms of biological role, catalyzes the reversible formation of acetate and ATP from acetyl-CoA by using ADP and phosphate. Can use other substrates such as propionyl-CoA and butyryl-CoA, but not phenylacetyl-CoA. Seems to be involved primarily in the conversion of acetyl-CoA to acetate. Participates in the degradation of branched-chain amino acids via branched-chain-acyl-CoA esters. The chain is Acetate--CoA ligase [ADP-forming] I from Archaeoglobus fulgidus (strain ATCC 49558 / DSM 4304 / JCM 9628 / NBRC 100126 / VC-16).